The chain runs to 842 residues: DNA gyrase subunit A (842 aa).

The Topo IIA-type catalytic domain occupies 42-511; that stretch reads LPEVRDGLKP…ADGEVSDEDL (470 aa). The active-site O-(5'-phospho-DNA)-tyrosine intermediate is Y130. A GyrA-box motif is present at residues 538-544; the sequence is QKRGGKG. The segment at 822 to 842 is disordered; it reads EDEAAESISESDADTAESPEA.

It belongs to the type II topoisomerase GyrA/ParC subunit family. As to quaternary structure, heterotetramer, composed of two GyrA and two GyrB chains. In the heterotetramer, GyrA contains the active site tyrosine that forms a transient covalent intermediate with DNA, while GyrB binds cofactors and catalyzes ATP hydrolysis.

The protein resides in the cytoplasm. It carries out the reaction ATP-dependent breakage, passage and rejoining of double-stranded DNA.. Inhibited by 4-quinoline drugs (nalidixic acid, ciprofloxacin, ofloxacin), although it is much less sensitive than the corresponding enzyme from E.coli. Its function is as follows. A type II topoisomerase that negatively supercoils closed circular double-stranded (ds) DNA in an ATP-dependent manner to modulate DNA topology and maintain chromosomes in an underwound state. Negative supercoiling favors strand separation, and DNA replication, transcription, recombination and repair, all of which involve strand separation. Also able to catalyze the interconversion of other topological isomers of dsDNA rings, including catenanes and knotted rings. Type II topoisomerases break and join 2 DNA strands simultaneously in an ATP-dependent manner. The polypeptide is DNA gyrase subunit A (Mycolicibacterium smegmatis (strain ATCC 700084 / mc(2)155) (Mycobacterium smegmatis)).